Reading from the N-terminus, the 548-residue chain is ATP synthase subunit alpha (548 aa).

172-179 provides a ligand contact to ATP; sequence GDRKTGKT. Residues 526–548 are disordered; that stretch reads AEAMDEADVEKESVKVRKPAPKK.

It belongs to the ATPase alpha/beta chains family. As to quaternary structure, F-type ATPases have 2 components, CF(1) - the catalytic core - and CF(0) - the membrane proton channel. CF(1) has five subunits: alpha(3), beta(3), gamma(1), delta(1), epsilon(1). CF(0) has three main subunits: a(1), b(2) and c(9-12). The alpha and beta chains form an alternating ring which encloses part of the gamma chain. CF(1) is attached to CF(0) by a central stalk formed by the gamma and epsilon chains, while a peripheral stalk is formed by the delta and b chains.

It localises to the cell membrane. The catalysed reaction is ATP + H2O + 4 H(+)(in) = ADP + phosphate + 5 H(+)(out). Its function is as follows. Produces ATP from ADP in the presence of a proton gradient across the membrane. The alpha chain is a regulatory subunit. The polypeptide is ATP synthase subunit alpha (Mycolicibacterium gilvum (strain PYR-GCK) (Mycobacterium gilvum (strain PYR-GCK))).